Here is a 105-residue protein sequence, read N- to C-terminus: N(4)-acetylcytidine amidohydrolase (105 aa).

One can recognise an ASCH domain in the interval 8–93 (TFFEFLTPLV…ALIQEIYPNI (86 aa)). The active-site Proton acceptor is the Lys-22. The active-site Nucleophile is the Thr-25. Glu-75 acts as the Proton donor in catalysis.

This sequence belongs to the N(4)-acetylcytidine amidohydrolase family.

The enzyme catalyses N(4)-acetylcytidine + H2O = cytidine + acetate + H(+). The catalysed reaction is N(4)-acetyl-2'-deoxycytidine + H2O = 2'-deoxycytidine + acetate + H(+). It carries out the reaction N(4)-acetylcytosine + H2O = cytosine + acetate + H(+). Catalyzes the hydrolysis of N(4)-acetylcytidine (ac4C). The sequence is that of N(4)-acetylcytidine amidohydrolase from Vibrio cholerae serotype O1 (strain ATCC 39315 / El Tor Inaba N16961).